The primary structure comprises 425 residues: Serine hydroxymethyltransferase (425 aa).

Residues Leu-122 and Gly-126–Leu-128 contribute to the (6S)-5,6,7,8-tetrahydrofolate site. Lys-231 carries the post-translational modification N6-(pyridoxal phosphate)lysine. Ser-355–Phe-357 is a (6S)-5,6,7,8-tetrahydrofolate binding site.

Belongs to the SHMT family. In terms of assembly, homodimer. Requires pyridoxal 5'-phosphate as cofactor.

Its subcellular location is the cytoplasm. It catalyses the reaction (6R)-5,10-methylene-5,6,7,8-tetrahydrofolate + glycine + H2O = (6S)-5,6,7,8-tetrahydrofolate + L-serine. It participates in one-carbon metabolism; tetrahydrofolate interconversion. The protein operates within amino-acid biosynthesis; glycine biosynthesis; glycine from L-serine: step 1/1. Its function is as follows. Catalyzes the reversible interconversion of serine and glycine with tetrahydrofolate (THF) serving as the one-carbon carrier. This reaction serves as the major source of one-carbon groups required for the biosynthesis of purines, thymidylate, methionine, and other important biomolecules. Also exhibits THF-independent aldolase activity toward beta-hydroxyamino acids, producing glycine and aldehydes, via a retro-aldol mechanism. The chain is Serine hydroxymethyltransferase from Rippkaea orientalis (strain PCC 8801 / RF-1) (Cyanothece sp. (strain PCC 8801)).